Reading from the N-terminus, the 201-residue chain is Peptidyl-tRNA hydrolase (201 aa).

Position 14 (Y14) interacts with tRNA. H19 serves as the catalytic Proton acceptor. TRNA-binding residues include Y64, N66, and N112.

This sequence belongs to the PTH family. In terms of assembly, monomer.

The protein resides in the cytoplasm. The enzyme catalyses an N-acyl-L-alpha-aminoacyl-tRNA + H2O = an N-acyl-L-amino acid + a tRNA + H(+). In terms of biological role, hydrolyzes ribosome-free peptidyl-tRNAs (with 1 or more amino acids incorporated), which drop off the ribosome during protein synthesis, or as a result of ribosome stalling. Functionally, catalyzes the release of premature peptidyl moieties from peptidyl-tRNA molecules trapped in stalled 50S ribosomal subunits, and thus maintains levels of free tRNAs and 50S ribosomes. The polypeptide is Peptidyl-tRNA hydrolase (Bradyrhizobium diazoefficiens (strain JCM 10833 / BCRC 13528 / IAM 13628 / NBRC 14792 / USDA 110)).